A 259-amino-acid polypeptide reads, in one-letter code: 3'-5' ssDNA/RNA exonuclease TatD (259 aa).

A divalent metal cation-binding residues include Glu92, His128, and His153.

Belongs to the metallo-dependent hydrolases superfamily. TatD-type hydrolase family. TatD subfamily. Monomer. The cofactor is Mg(2+).

It localises to the cytoplasm. Its function is as follows. 3'-5' exonuclease that prefers single-stranded DNA and RNA. May play a role in the H(2)O(2)-induced DNA damage repair. The polypeptide is 3'-5' ssDNA/RNA exonuclease TatD (Erwinia tasmaniensis (strain DSM 17950 / CFBP 7177 / CIP 109463 / NCPPB 4357 / Et1/99)).